Here is a 41-residue protein sequence, read N- to C-terminus: Peroxidase 3 (41 aa).

The protein belongs to the peroxidase family. Classical plant (class III) peroxidase subfamily. Heme b serves as cofactor. The cofactor is Ca(2+).

It is found in the secreted. The enzyme catalyses 2 a phenolic donor + H2O2 = 2 a phenolic radical donor + 2 H2O. Functionally, removal of H(2)O(2), oxidation of toxic reductants, biosynthesis and degradation of lignin, suberization, auxin catabolism, response to environmental stresses such as wounding, pathogen attack and oxidative stress. These functions might be dependent on each isozyme/isoform in each plant tissue. In Vitis vinifera (Grape), this protein is Peroxidase 3.